Consider the following 234-residue polypeptide: 5'-methylthioadenosine/S-adenosylhomocysteine nucleosidase (234 aa).

Glu12 serves as the catalytic Proton acceptor. Substrate is bound by residues Gly78, Ile152, and 173-174 (ME). The active-site Proton donor is the Asp197.

This sequence belongs to the PNP/UDP phosphorylase family. MtnN subfamily.

The catalysed reaction is S-adenosyl-L-homocysteine + H2O = S-(5-deoxy-D-ribos-5-yl)-L-homocysteine + adenine. It catalyses the reaction S-methyl-5'-thioadenosine + H2O = 5-(methylsulfanyl)-D-ribose + adenine. It carries out the reaction 5'-deoxyadenosine + H2O = 5-deoxy-D-ribose + adenine. The protein operates within amino-acid biosynthesis; L-methionine biosynthesis via salvage pathway; S-methyl-5-thio-alpha-D-ribose 1-phosphate from S-methyl-5'-thioadenosine (hydrolase route): step 1/2. In terms of biological role, catalyzes the irreversible cleavage of the glycosidic bond in both 5'-methylthioadenosine (MTA) and S-adenosylhomocysteine (SAH/AdoHcy) to adenine and the corresponding thioribose, 5'-methylthioribose and S-ribosylhomocysteine, respectively. Also cleaves 5'-deoxyadenosine, a toxic by-product of radical S-adenosylmethionine (SAM) enzymes, into 5-deoxyribose and adenine. This chain is 5'-methylthioadenosine/S-adenosylhomocysteine nucleosidase, found in Desulfotalea psychrophila (strain LSv54 / DSM 12343).